The following is a 370-amino-acid chain: Phospho-N-acetylmuramoyl-pentapeptide-transferase (370 aa).

The next 10 helical transmembrane spans lie at 29–49 (AGLT…SFLL), 70–90 (GTPT…TLLW), 93–113 (LSNW…GLGF), 133–153 (KFIV…YYTG), 177–197 (GPVW…LIGS), 209–229 (GLAS…AYVS), 251–271 (VFLA…CHPA), 273–293 (VFMG…VAIM), 298–318 (ILLV…ILQV), and 349–369 (VIRF…TLKI).

The protein belongs to the glycosyltransferase 4 family. MraY subfamily. The cofactor is Mg(2+).

The protein resides in the cell inner membrane. It carries out the reaction UDP-N-acetyl-alpha-D-muramoyl-L-alanyl-gamma-D-glutamyl-meso-2,6-diaminopimeloyl-D-alanyl-D-alanine + di-trans,octa-cis-undecaprenyl phosphate = di-trans,octa-cis-undecaprenyl diphospho-N-acetyl-alpha-D-muramoyl-L-alanyl-D-glutamyl-meso-2,6-diaminopimeloyl-D-alanyl-D-alanine + UMP. The protein operates within cell wall biogenesis; peptidoglycan biosynthesis. Its function is as follows. Catalyzes the initial step of the lipid cycle reactions in the biosynthesis of the cell wall peptidoglycan: transfers peptidoglycan precursor phospho-MurNAc-pentapeptide from UDP-MurNAc-pentapeptide onto the lipid carrier undecaprenyl phosphate, yielding undecaprenyl-pyrophosphoryl-MurNAc-pentapeptide, known as lipid I. The protein is Phospho-N-acetylmuramoyl-pentapeptide-transferase of Leptospira biflexa serovar Patoc (strain Patoc 1 / Ames).